The following is a 428-amino-acid chain: Enolase (428 aa).

Position 162 (Q162) interacts with (2R)-2-phosphoglycerate. E204 functions as the Proton donor in the catalytic mechanism. D241, E283, and D310 together coordinate Mg(2+). (2R)-2-phosphoglycerate is bound by residues K335, R364, S365, and K386. K335 (proton acceptor) is an active-site residue.

Belongs to the enolase family. Mg(2+) is required as a cofactor.

The protein localises to the cytoplasm. The protein resides in the secreted. It is found in the cell surface. It catalyses the reaction (2R)-2-phosphoglycerate = phosphoenolpyruvate + H2O. Its pathway is carbohydrate degradation; glycolysis; pyruvate from D-glyceraldehyde 3-phosphate: step 4/5. In terms of biological role, catalyzes the reversible conversion of 2-phosphoglycerate (2-PG) into phosphoenolpyruvate (PEP). It is essential for the degradation of carbohydrates via glycolysis. This Rhodococcus opacus (strain B4) protein is Enolase.